Consider the following 321-residue polypeptide: Tetraacyldisaccharide 4'-kinase (321 aa).

Position 54–61 (54–61 (SVGGTGKT)) interacts with ATP.

This sequence belongs to the LpxK family.

It catalyses the reaction a lipid A disaccharide + ATP = a lipid IVA + ADP + H(+). It functions in the pathway glycolipid biosynthesis; lipid IV(A) biosynthesis; lipid IV(A) from (3R)-3-hydroxytetradecanoyl-[acyl-carrier-protein] and UDP-N-acetyl-alpha-D-glucosamine: step 6/6. Functionally, transfers the gamma-phosphate of ATP to the 4'-position of a tetraacyldisaccharide 1-phosphate intermediate (termed DS-1-P) to form tetraacyldisaccharide 1,4'-bis-phosphate (lipid IVA). The polypeptide is Tetraacyldisaccharide 4'-kinase (Rickettsia conorii (strain ATCC VR-613 / Malish 7)).